The sequence spans 600 residues: MNNQKYIRNFSIIAHIDHGKSTLADRLIEHCGGLNAREMSQQVLDSMDIEKERGITIKAQTVRLVYKAKNGNTYYLNLMDTPGHVDFSYEVSRSLAACEGSLLVVDSTQGVEAQTLANVYQAIANDHEIVPVLNKIDLAASEPEHVKKQIEDIIGIDASEAVLISAKNGIGIDSVLEAIINKLPSPKESSTDTLKALLVDSWYDPYLGVVILVRIIDGTLRKNMRVKMIGTNSVYTVEHVGFFTPKKHISDVLYAGEIGFFTASIKRVSDCKVGDTITDEKKSCEQALPGFKPNIPVVFCGFYPTDSAEFEHLKDSLAKLRLNDASFEYEMESSSALGVGFRCGFLGLLHLEIIQERLSREFNLDLITTAPSVIYKIYMLDGESLEIHNPADLPDLQKIASMEEPWIKATIMVPDEFIGTVLSLCKEKRGIQLDHSYISNRAKIVYKLPLNEIVYDFYDRLKSCSKGYASFEWQMDVYELSDLVNLRILVNGEVVDALSTIVHRSRAEQRGRALCVRLKDLIPRQQIDIAIQASVGNRIIARETIKALRKDVLSKCYGGDISRKRKLLEKQKAGKKKMRQYGNIEIPQSAFIAALQIGGE.

In terms of domain architecture, tr-type G spans 5–187 (KYIRNFSIIA…AIINKLPSPK (183 aa)). Residues 17 to 22 (DHGKST) and 134 to 137 (NKID) each bind GTP.

Belongs to the TRAFAC class translation factor GTPase superfamily. Classic translation factor GTPase family. LepA subfamily.

Its subcellular location is the cell inner membrane. The enzyme catalyses GTP + H2O = GDP + phosphate + H(+). Required for accurate and efficient protein synthesis under certain stress conditions. May act as a fidelity factor of the translation reaction, by catalyzing a one-codon backward translocation of tRNAs on improperly translocated ribosomes. Back-translocation proceeds from a post-translocation (POST) complex to a pre-translocation (PRE) complex, thus giving elongation factor G a second chance to translocate the tRNAs correctly. Binds to ribosomes in a GTP-dependent manner. The polypeptide is Elongation factor 4 (Rickettsia typhi (strain ATCC VR-144 / Wilmington)).